A 180-amino-acid polypeptide reads, in one-letter code: Signal peptidase complex subunit 2 (180 aa).

At Met1–Arg45 the chain is on the cytoplasmic side. Residues Leu46–Glu66 traverse the membrane as a helical segment. At Pro67–Lys72 the chain is on the lumenal side. A helical transmembrane segment spans residues Ile73–Gln93. Residues Trp94–Gln180 are Cytoplasmic-facing.

The protein belongs to the SPCS2 family. As to quaternary structure, component of the signal peptidase complex (SPC) composed of a catalytic subunit sec-11 and three accessory subunits spcs-1, spcs-2 and spcs-3. The complex induces a local thinning of the ER membrane which is used to measure the length of the signal peptide (SP) h-region of protein substrates. This ensures the selectivity of the complex towards h-regions shorter than 18-20 amino acids.

The protein localises to the endoplasmic reticulum membrane. In terms of biological role, component of the signal peptidase complex (SPC) which catalyzes the cleavage of N-terminal signal sequences from nascent proteins as they are translocated into the lumen of the endoplasmic reticulum. Enhances the enzymatic activity of SPC and facilitates the interactions between different components of the translocation site. The polypeptide is Signal peptidase complex subunit 2 (Caenorhabditis elegans).